Consider the following 164-residue polypeptide: Oocyte-expressed protein homolog (164 aa).

The 62-residue stretch at 44–105 folds into the KH; atypical domain; it reads PLVLYMEAWV…SAQTRMKNIL (62 aa).

Belongs to the KHDC1 family. As to quaternary structure, component of the subcortical maternal complex (SCMC), at least composed of NLRP5, KHDC3, OOEP, and TLE6. Within the complex, interacts with NLRP5, KHDC3 and TLE6. The SCMC may facilitate translocation of its components between the nuclear and cytoplasmic compartments. As part of the SCMC interacts with the SCMC-associated protein NLRP4F. Forms a scaffold complex with KHDC3/FILIA, and interacts with BLM and TRIM25 at DNA replication forks. In terms of tissue distribution, expressed in ovaries, where it is restricted to growing oocytes, with greatest levels in fully grown oocytes.

Its subcellular location is the cytoplasm. The protein localises to the nucleus. In terms of biological role, component of the subcortical maternal complex (SCMC), a multiprotein complex that plays a key role in early embryonic development. The SCMC complex is a structural constituent of cytoplasmic lattices, which consist in fibrous structures found in the cytoplasm of oocytes and preimplantation embryos. They are required to store maternal proteins critical for embryonic development, such as proteins that control epigenetic reprogramming of the preimplantation embryo, and prevent their degradation or activation. As part of the OOEP-KHDC3 scaffold, recruits BLM and TRIM25 to DNA replication forks, thereby promoting the ubiquitination of BLM by TRIM25, enhancing BLM retainment at replication forks and therefore promoting stalled replication fork restart. Positively regulates the homologous recombination-mediated DNA double-strand break (DSB) repair pathway by regulating ATM activation and RAD51 recruitment to DSBs in oocytes. Thereby contributes to oocyte survival and the resumption and completion of meiosis. This Mus musculus (Mouse) protein is Oocyte-expressed protein homolog.